A 220-amino-acid chain; its full sequence is Botcinic acid biosynthesis cluster B protein 12 (220 aa).

The protein operates within polyketide biosynthesis. Functionally, part of the gene cluster B that mediates the biosynthesis of botcinic acid and its botcinin derivatives, acetate-derived polyketides that contribute to virulence when combined with the sesquiterpene botrydial. Botcinic acid and its derivatives have been shown to induce chlorosis and necrosis during host plant infection, but also have antifungal activities. Two polyketide synthases, BOA6 and BOA9, are involved in the biosynthesis of botcinins. BOA6 mediates the formation of the per-methylated tetraketide core by condensation of four units of malonyl-CoA with one unit of acetyl-CoA, which would be methylated in activated methylene groups to yield a bicyclic acid intermediate that could then either be converted to botrylactone derivatives or lose the starter acetate unit through a retro-Claisen type C-C bond cleavage to yield botcinin derivatives. The second polyketide synthase, BOA9, is probably required for the biosynthesis of the tetraketide side chain of botcinins. The methyltransferase (MT) domain within BOA6 is probably responsible for the incorporation of four methyl groups. The trans-enoyl reductase BOA5 might take over the enoyl reductase function of BOA6 that misses an ER domain. The monooxygenases BOA2, BOA3 and BOA4 might be involved in further hydroxylations at C4, C5 and C8, whereas BOA7, close to BOA9, could potentially be involved in the hydroxylation at C4 in the side chain of botcinins. This chain is Botcinic acid biosynthesis cluster B protein 12, found in Botryotinia fuckeliana (strain B05.10) (Noble rot fungus).